The chain runs to 295 residues: Phosphoribosylaminoimidazole-succinocarboxamide synthase (295 aa).

This sequence belongs to the SAICAR synthetase family.

The catalysed reaction is 5-amino-1-(5-phospho-D-ribosyl)imidazole-4-carboxylate + L-aspartate + ATP = (2S)-2-[5-amino-1-(5-phospho-beta-D-ribosyl)imidazole-4-carboxamido]succinate + ADP + phosphate + 2 H(+). The protein operates within purine metabolism; IMP biosynthesis via de novo pathway; 5-amino-1-(5-phospho-D-ribosyl)imidazole-4-carboxamide from 5-amino-1-(5-phospho-D-ribosyl)imidazole-4-carboxylate: step 1/2. The polypeptide is Phosphoribosylaminoimidazole-succinocarboxamide synthase (Desulforapulum autotrophicum (strain ATCC 43914 / DSM 3382 / VKM B-1955 / HRM2) (Desulfobacterium autotrophicum)).